Consider the following 271-residue polypeptide: MASLEIIKLEWVTPIFKVVEHSQDGLYILLQGQISWQSSGQTYDLDEGNMLFLRRGSYAVRCGTKEPCQLLWIPLPGSFLSTFLHRFGSLLSEIGRDNSTPKPLLIFNISPILSQSIQNLCAILERSDFPSVLTQLRIEELLLLLAFSSQGTLFLSALRHLGNRPEERLQKFMEENYLQGWKLSKFAREFGMGLTTFKELFGTVYGISPRAWISERRILYAHQLLLNGKMSIVDIAMEAGFSSQSYFTQSYRRRFGCTPSQARLTKIATTG.

Residues 167 to 265 (ERLQKFMEEN…GCTPSQARLT (99 aa)) enclose the HTH araC/xylS-type domain. 2 consecutive DNA-binding regions (H-T-H motif) follow at residues 184–205 (SKFA…GTVY) and 232–255 (IVDI…RRRF).

Its function is as follows. Transcriptional activator of the thermally regulated virulent yopE gene. LcrF activity could be modulated by the interaction with an inducer molecule serving as a temperature messenger. The availability of the messenger would in turn be controlled by a temperature-responsive process serving as a cellular thermometer. In Yersinia pestis, this protein is Thermoregulatory protein LcrF (lcrF).